A 219-amino-acid chain; its full sequence is Transmembrane protein 125 (219 aa).

The next 4 helical transmembrane spans lie at 36–56, 68–88, 114–134, and 147–167; these read LCFAVAVGLVAGCGAGGVALL, LAVGTALCLLALLVLVKQLMS, ALVVLLSGLVLLVTGLTLAGL, and MLSVGITLAASGALLLLGLLL.

Its subcellular location is the membrane. This Bos taurus (Bovine) protein is Transmembrane protein 125 (TMEM125).